The primary structure comprises 444 residues: ATP-dependent protease ATPase subunit HslU (444 aa).

ATP is bound by residues Ile18 and Gly60–Glu65. The tract at residues Asp141–Lys161 is disordered. Residues Glu147 to Gln157 show a composition bias toward polar residues. ATP is bound by residues Asp257, Glu322, and Arg394.

Belongs to the ClpX chaperone family. HslU subfamily. A double ring-shaped homohexamer of HslV is capped on each side by a ring-shaped HslU homohexamer. The assembly of the HslU/HslV complex is dependent on binding of ATP.

Its subcellular location is the cytoplasm. In terms of biological role, ATPase subunit of a proteasome-like degradation complex; this subunit has chaperone activity. The binding of ATP and its subsequent hydrolysis by HslU are essential for unfolding of protein substrates subsequently hydrolyzed by HslV. HslU recognizes the N-terminal part of its protein substrates and unfolds these before they are guided to HslV for hydrolysis. The chain is ATP-dependent protease ATPase subunit HslU from Aliivibrio fischeri (strain ATCC 700601 / ES114) (Vibrio fischeri).